A 124-amino-acid chain; its full sequence is Small ribosomal subunit protein bS6 (124 aa).

The interval 96-124 (ETGPSPMMKEVQREEAKKAAAAQPTEAQA) is disordered. Positions 114-124 (AAAAQPTEAQA) are enriched in low complexity.

Belongs to the bacterial ribosomal protein bS6 family.

Functionally, binds together with bS18 to 16S ribosomal RNA. The protein is Small ribosomal subunit protein bS6 of Burkholderia lata (strain ATCC 17760 / DSM 23089 / LMG 22485 / NCIMB 9086 / R18194 / 383).